A 1140-amino-acid polypeptide reads, in one-letter code: Eukaryotic translation initiation factor 3 subunit A (1140 aa).

The PCI domain occupies 319-502; the sequence is LQRMAAHVLL…NSIYFGTDLT (184 aa). Basic and acidic residues-rich tracts occupy residues 589–624, 830–900, and 921–984; these read QNNAREEEEARRQEEESRKAKLAEQKRLEQEQEERE, AAEE…RGGD, and ERND…EPDS. 2 disordered regions span residues 589–632 and 830–1140; these read QNNA…QNEI and AAEE…VKRR. The segment covering 987 to 998 has biased composition (low complexity); sequence AAGAKDAGGAPA. Basic and acidic residues-rich tracts occupy residues 999 to 1050, 1058 to 1086, and 1109 to 1130; these read SRDD…EPQR, DAPRQSDRDNRRPGGERRDRDGRDVRGDQ, and PRDEKPAAKRDQPQDKENKGGD.

Belongs to the eIF-3 subunit A family. In terms of assembly, component of the eukaryotic translation initiation factor 3 (eIF-3) complex. The eIF-3 complex interacts with pix.

The protein localises to the cytoplasm. In terms of biological role, RNA-binding component of the eukaryotic translation initiation factor 3 (eIF-3) complex, which is involved in protein synthesis of a specialized repertoire of mRNAs and, together with other initiation factors, stimulates binding of mRNA and methionyl-tRNAi to the 40S ribosome. The eIF-3 complex specifically targets and initiates translation of a subset of mRNAs involved in cell proliferation. This Drosophila ananassae (Fruit fly) protein is Eukaryotic translation initiation factor 3 subunit A.